Consider the following 400-residue polypeptide: Argininosuccinate synthase (400 aa).

8 to 16 provides a ligand contact to ATP; it reads AYSGGLDTS. Tyr87 and Ser92 together coordinate L-citrulline. Gly117 lines the ATP pocket. 3 residues coordinate L-aspartate: Thr119, Asn123, and Asp124. Asn123 contributes to the L-citrulline binding site. Arg127, Ser175, Glu259, and Tyr271 together coordinate L-citrulline.

This sequence belongs to the argininosuccinate synthase family. Type 1 subfamily. In terms of assembly, homotetramer.

The protein localises to the cytoplasm. The catalysed reaction is L-citrulline + L-aspartate + ATP = 2-(N(omega)-L-arginino)succinate + AMP + diphosphate + H(+). Its pathway is amino-acid biosynthesis; L-arginine biosynthesis; L-arginine from L-ornithine and carbamoyl phosphate: step 2/3. This chain is Argininosuccinate synthase, found in Frankia alni (strain DSM 45986 / CECT 9034 / ACN14a).